The following is a 77-amino-acid chain: uncharacterized protein (77 aa).

This is an uncharacterized protein from Acidianus hospitalis (AFV-1).